A 23-amino-acid chain; its full sequence is M-myrmeciitoxin-Mp2b (23 aa).

Q23 carries the glutamine amide modification.

The protein belongs to the formicidae venom precursor-01 superfamily. Ant pilosulin family. Heterodimer with M-MIITX-Mp2a (pilosulin-3a) (AC Q26464); disulfide-linked. Only heterodimers (and not monomers) have been identified in the venom. In terms of tissue distribution, expressed by the venom gland.

It is found in the secreted. Functionally, heterodimer protein that may serve both defensive (pain-inducing) and predatory (insecticidal) roles. Has membrane-disrupting activity and shows induction of non-specific calcium influx into cells,. Shows broad-spectrum activity against a diverse range of bacteria, and cell lines, as well as hemolytic activity (EC(50)=2.18 uM). In vivo, shows moderate insecticidal activity against D.melanogaster and potent anthelmintic activity against the veterinary nematode H.contortus. In addition, intraplantar injection into mice induces nocifensive behavior and mechanical allodynia. The sequence is that of M-myrmeciitoxin-Mp2b from Myrmecia pilosula (Jack jumper ant).